The sequence spans 77 residues: U8-lycotoxin-Ls1h (77 aa).

Residues 1–20 (MKLIIFTGLVLFAIVSLIEV) form the signal peptide. The propeptide occupies 21–26 (QADNER).

Belongs to the neurotoxin 19 (CSTX) family. 08 (U8-Lctx) subfamily. Post-translationally, contains 4 disulfide bonds. Expressed by the venom gland.

The protein localises to the secreted. The chain is U8-lycotoxin-Ls1h from Lycosa singoriensis (Wolf spider).